The chain runs to 225 residues: Type II restriction enzyme BslI subunit alpha (225 aa).

2 C4-type zinc fingers span residues 36 to 53 (CKDCGQYWHTSLSECYFC) and 63 to 84 (CNSCGKKYSLTSSSKSCDTDGC).

In terms of assembly, heterotetramer of two alpha and two beta subunits. The alpha subunit is believed to be responsible for DNA recognition, while the beta subunit is thought to mediate cleavage. Requires Zn(2+) as cofactor.

The enzyme catalyses Endonucleolytic cleavage of DNA to give specific double-stranded fragments with terminal 5'-phosphates.. A P subtype restriction enzyme that recognizes the double-stranded sequence 5'-CCN(7)GG-3' and cleaves after N-7. The sequence is that of Type II restriction enzyme BslI subunit alpha from Bacillus sp. (strain NEB-606).